We begin with the raw amino-acid sequence, 575 residues long: Transcription factor E3 (575 aa).

Ser-47 is subject to Phosphoserine; by MTOR. The segment covering 90–126 has biased composition (low complexity); sequence ATLSASSSAGGSRTPAMSSSSSSRVLLRQQLMRAQAQ. Residues 90-153 form a disordered region; it reads ATLSASSSAG…SPAPASPAIS (64 aa). Residues 127 to 136 show a composition bias toward basic and acidic residues; it reads EQERRERREQ. An Asymmetric dimethylarginine modification is found at Arg-188. The segment at 211–246 is disordered; it reads LASQALTPPPGPASAQPLPAPEAAHTTGPTGSAPNS. Residues 260–271 form a strong transcription activation domain region; the sequence is EIDDVIDEIISL. Ser-321 is modified (phosphoserine; by MTOR). Lys-339 is covalently cross-linked (Glycyl lysine isopeptide (Lys-Gly) (interchain with G-Cter in SUMO2)). In terms of domain architecture, bHLH spans 346-399; it reads QKKDNHNLIERRRRFNINDRIKELGTLIPKSSDPEMRWNKGTILKASVDYIRKL. A Nuclear localization signal motif is present at residues 356–359; it reads RRRR. The leucine-zipper stretch occupies residues 409 to 430; that stretch reads LESRQRSLEQANRSLQLRIQEL. 2 disordered regions span residues 473-498 and 534-575; these read GAAT…PPSD and GGLS…EEES. A compositionally biased stretch (low complexity) spans 539 to 575; sequence GALSPLRAASDPLLSSVSPAVSKASSRRSSFSMEEES. Phosphoserine occurs at positions 542, 548, 554, 556, 560, and 568.

It belongs to the MiT/TFE family. As to quaternary structure, homodimer and heterodimer; with TFEB or MITF. Interacts with RRAGC/RagC GDP-bound and RRAGD/RagD GDP-bound; promoting its recruitment to lysosomal membrane in the presence of nutrients. Interacts with TSC22D1; the interaction is enhanced in the presence of TGF-beta. In terms of processing, sumoylated; does not affect dimerization with MITF. Post-translationally, phosphorylation ar Ser-47 and Ser-321 by MTOR via non-canonical mTORC1 pathway regulates its stability and subcellular location, respectively. When nutrients are present, phosphorylation by MTOR at Ser-47 promotes ubiquitination by the SCF(BTRC) complex, followed by degradation. When nutrients are present, phosphorylation by MTOR at Ser-321 also promotes association with 14-3-3/YWHA adapters and retention in the cytosol. Phosphorylation at Ser-47 plays a more critical role than phosphorylation at Ser-321 for TFE3 inactivation. Inhibition of mTORC1, starvation and lysosomal disruption, promotes dephosphorylation and transcription factor activity. Ubiquitinated by the SCF(BTRC) and SCF(FBXW11) complexes following phosphorylation at Ser-47 by MTOR, leading to its degradation by the proteasome. As to expression, ubiquitous in fetal and adult tissues.

The protein localises to the cytoplasm. Its subcellular location is the cytosol. It is found in the nucleus. It localises to the lysosome membrane. Transcription factor that acts as a master regulator of lysosomal biogenesis and immune response. Specifically recognizes and binds E-box sequences (5'-CANNTG-3'); efficient DNA-binding requires dimerization with itself or with another MiT/TFE family member such as TFEB or MITF. Involved in the cellular response to amino acid availability by acting downstream of MTOR: in the presence of nutrients, TFE3 phosphorylation by MTOR promotes its inactivation. Upon starvation or lysosomal stress, inhibition of MTOR induces TFE3 dephosphorylation, resulting in transcription factor activity. Specifically recognizes and binds the CLEAR-box sequence (5'-GTCACGTGAC-3') present in the regulatory region of many lysosomal genes, leading to activate their expression, thereby playing a central role in expression of lysosomal genes. Maintains the pluripotent state of embryonic stem cells by promoting the expression of genes such as ESRRB; mTOR-dependent TFE3 cytosolic retention and inactivation promotes exit from pluripotency. Required to maintain the naive pluripotent state of hematopoietic stem cell; mTOR-dependent cytoplasmic retention of TFE3 promotes the exit of hematopoietic stem cell from pluripotency. TFE3 activity is also involved in the inhibition of neuronal progenitor differentiation. Acts as a positive regulator of browning of adipose tissue by promoting expression of target genes; mTOR-dependent phosphorylation promotes cytoplasmic retention of TFE3 and inhibits browning of adipose tissue. In association with TFEB, activates the expression of CD40L in T-cells, thereby playing a role in T-cell-dependent antibody responses in activated CD4(+) T-cells and thymus-dependent humoral immunity. Specifically recognizes the MUE3 box, a subset of E-boxes, present in the immunoglobulin enhancer. It also binds very well to a USF/MLTF site. Promotes TGF-beta-induced transcription of COL1A2; via its interaction with TSC22D1 at E-boxes in the gene proximal promoter. May regulate lysosomal positioning in response to nutrient deprivation by promoting the expression of PIP4P1. The sequence is that of Transcription factor E3 from Homo sapiens (Human).